The chain runs to 1299 residues: MSSLSTGGGAGGSSGGPGGADAAAAPAAGQATVTATGNMEPAMVPRTANLLACKQWWRVCFLYGDQQKYYRQLYSKAAAQRLADANQEPDNARDREYDTVDCDLIAGQLDAVEDADDGIDLGDHSSTPKGGATTAGRPLFPHSSSPRRSKKLLRSLRAHVRGEKLPKNDTTTANESSEVTQRNARVTVLDDPFLFGIDADHLGDLVVRGKRYSTLDATENMARFYAEQEATAQVLEIIEQEEESPEQEAPKPALPPKQKQQRPVPPLPPPPANRVTQDQGTQPAAPQVPLQPLTAGDLQFLNLSLRQRSLPRSMKPFKDAHDISFTFNELDTSAEPEVATGAAQQESNEPISRTPLTQISYLQKIPTLPRHFSPSGQGLATPPALGSGGMGLPSSSSASALYAAQAAAGILPTSPLPLQRHQQYLPPHHQQHPGAGMGPGPGSGAAAGPPLGPQYSPGCSANPKYSNAQLPPPPHHHHQLSPALSTPSPPSLLHHPAGGTSSASAHAPFLGGPHMDMQRQSHSDDDSGCALEEYTWVPPGLRPDQVRLYFSQIPDDKVPYVNSPGEQYRVRQLLHQLPPHDNEVRYCHSLTDEERKELRLFSTQRKRDALGRGNVRQLMSARPCDGCDDLISTGDIAVFATRLGPNASWHPACFACSVCRELLVDLIYFHRDGRMYCGRHHAETLKPRCSACDEIILADECTEAEGRAWHMNHFACHECDKQLGGQRYIMREGKPYCLHCFDAMFAEYCDYCGEAIGVDQGQMSHDGQHWHATDECFSCNTCRCSLLGRAFLPRRGAIYCSIACSKGEPPTPSDSSGTGMYTTPTPPTQRVRPHPQAPLPARIPSSHASSSPPMSPQQQQQHQATFNQAMYQMQSQQMEAAGGLVDQSKSYAASDSDAGVVKDLEHGGHMGGGDLTDFSGGRASSTSQNLSPLNSPGDFQPHFLPKPMELQRDGVYNFNEMSSNLDAAWSAKPTNSYHLQRQLLENPHTASMPELAGKLVAPPAHMQHLSQLHAVSSHQFQQHEYADILHPPPPPPGEIPELPTPNLSVASTALPPELMGSPTHSAGDRSLNTPMSTQSASHAPPHPVSILSGASSSSPMSGEPAKKKGVRFEGIPDTLPRSRSYSGNGAGTSGGGERERDRDKDKEGGGRHGHGHSSRRRRRRKSSSSSSHHRSGSGHRSHSTTRADTYAPAQPLSSSYQGPPSVLQAANLVHESPSRQQREREREREREESEESDVCSTCSSSSSSSEDYMMMYQLPQRRHYGGVRVSYVPNDALAYDRKRKPSELGGDKDKNCIIS.

The segment covering 1–19 (MSSLSTGGGAGGSSGGPGG) has biased composition (gly residues). Disordered stretches follow at residues 1–24 (MSSL…DAAA), 115–181 (ADDG…EVTQ), 241–289 (EEES…PQVP), 368–396 (LPRH…PSSS), and 425–527 (LPPH…DDDS). A compositionally biased stretch (basic residues) spans 145–159 (SPRRSKKLLRSLRAH). Residues 168 to 181 (NDTTTANESSEVTQ) show a composition bias toward polar residues. The span at 263–272 (PVPPLPPPPA) shows a compositional bias: pro residues. Low complexity predominate over residues 425 to 434 (LPPHHQQHPG). Residues 435–445 (AGMGPGPGSGA) are compositionally biased toward gly residues. Polar residues predominate over residues 457-469 (PGCSANPKYSNAQ). In terms of domain architecture, PET spans 515-623 (MDMQRQSHSD…NVRQLMSARP (109 aa)). Positions 516-525 (DMQRQSHSDD) are enriched in basic and acidic residues. LIM zinc-binding domains are found at residues 622-686 (RPCD…ETLK), 687-747 (PRCS…MFAE), and 748-810 (YCDY…GEPP). Disordered stretches follow at residues 807–865 (GEPP…HQAT), 902–940 (KDLE…GDFQ), and 1026–1249 (ADIL…SSSS). Positions 844-864 (PSSHASSSPPMSPQQQQQHQA) are enriched in low complexity. Polar residues-rich tracts occupy residues 922-934 (RASS…SPLN) and 1070-1081 (SLNTPMSTQSAS). Positions 1089-1101 (SILSGASSSSPMS) are enriched in low complexity. The span at 1136–1150 (GERERDRDKDKEGGG) shows a compositional bias: basic and acidic residues. The segment covering 1151–1183 (RHGHGHSSRRRRRRKSSSSSSHHRSGSGHRSHS) has biased composition (basic residues). Residues 1216–1231 (SPSRQQRERERERERE) are compositionally biased toward basic and acidic residues. The segment covering 1238-1249 (VCSTCSSSSSSS) has biased composition (low complexity).

It belongs to the prickle / espinas / testin family. As to quaternary structure, interacts with dsh; PET and LIM domains interact with dsh DEP domain, in wing cells. Interacts with Vang in photoreceptor cells. Expressed in the wing, leg and eye imaginal disks. Expressed within the photoreceptors of the eye.

It is found in the cell membrane. Acts in a planar cell polarity (PCP) complex; polarization along the apical/basal axis of epithelial cells. Correct expression of the alternative isoforms is required for PCP signaling in imaginal disks. PCP signaling in the wing disk requires the receptor fz and the cytoplasmic proteins dsh and pk. These act in a feedback loop leading to activation of the jnk cascade and subsequent polarized arrangement of hairs and bristles. Dgo and pk compete with one another for dsh binding, thereby modulating fz dsh activity and ensuring tight control over fz PCP signaling. Vang, stan and pk function together to regulate the establishment of tissue polarity in the adult eye. This is Protein prickle from Drosophila melanogaster (Fruit fly).